The following is a 126-amino-acid chain: Histone H2B type 1-D (126 aa).

Low complexity predominate over residues 1-12 (MPEPTKSAPAPK). A disordered region spans residues 1 to 36 (MPEPTKSAPAPKKGSKKAVTKAQKKDGKKRKRSRKE). Position 2 is an N-acetylproline (P2). E3 carries the post-translational modification ADP-ribosyl glutamic acid. The residue at position 6 (K6) is an N6-(2-hydroxyisobutyryl)lysine; alternate. An N6-(beta-hydroxybutyryl)lysine; alternate modification is found at K6. At K6 the chain carries N6-acetyllysine; alternate. K6 bears the N6-butyryllysine; alternate mark. K6 is modified (N6-crotonyllysine; alternate). Residue K6 is modified to N6-lactoyllysine; alternate. K6 is covalently cross-linked (Glycyl lysine isopeptide (Lys-Gly) (interchain with G-Cter in SUMO2); alternate). S7 bears the ADP-ribosylserine mark. K12 carries the N6-(beta-hydroxybutyryl)lysine; alternate modification. 2 positions are modified to N6-acetyllysine; alternate: K12 and K13. 2 positions are modified to N6-crotonyllysine; alternate: K12 and K13. N6-lactoyllysine; alternate is present on K12. An N6-(2-hydroxyisobutyryl)lysine; alternate modification is found at K13. S15 is modified (phosphoserine; by STK4/MST1). Residues K16, K17, K21, and K24 each carry the N6-acetyllysine; alternate modification. An N6-crotonyllysine; alternate mark is found at K16, K17, K21, and K24. 4 positions are modified to N6-lactoyllysine; alternate: K16, K17, K21, and K24. Residues K17 and K21 each carry the N6-(beta-hydroxybutyryl)lysine; alternate modification. K17 is modified (N6-glutaryllysine; alternate). N6-(2-hydroxyisobutyryl)lysine; alternate is present on residues K21 and K24. K21 carries the post-translational modification N6-butyryllysine; alternate. A Glycyl lysine isopeptide (Lys-Gly) (interchain with G-Cter in SUMO2); alternate cross-link involves residue K21. K25 carries the N6-(2-hydroxyisobutyryl)lysine modification. At K35 the chain carries N6-(2-hydroxyisobutyryl)lysine; alternate. K35 carries the post-translational modification N6-(beta-hydroxybutyryl)lysine; alternate. Position 35 is an N6-crotonyllysine; alternate (K35). Residue K35 is modified to N6-glutaryllysine; alternate. K35 is subject to N6-succinyllysine; alternate. K35 is covalently cross-linked (Glycyl lysine isopeptide (Lys-Gly) (interchain with G-Cter in ubiquitin); alternate). E36 bears the PolyADP-ribosyl glutamic acid mark. S37 carries the post-translational modification Phosphoserine; by AMPK. Residues K44, K47, and K58 each carry the N6-(2-hydroxyisobutyryl)lysine; alternate modification. At K44 the chain carries N6-lactoyllysine; alternate. N6-glutaryllysine; alternate occurs at positions 44 and 47. K47 carries the N6-methyllysine; alternate modification. An N6,N6-dimethyllysine; alternate modification is found at K58. R80 carries the post-translational modification Dimethylated arginine. K86 is subject to N6-(2-hydroxyisobutyryl)lysine; alternate. K86 bears the N6-(beta-hydroxybutyryl)lysine; alternate mark. The residue at position 86 (K86) is an N6-acetyllysine; alternate. At K86 the chain carries N6-lactoyllysine; alternate. K86 carries the post-translational modification N6,N6,N6-trimethyllysine; alternate. Residues R87 and R93 each carry the omega-N-methylarginine modification. K109 bears the N6-(2-hydroxyisobutyryl)lysine; alternate mark. Residue K109 is modified to N6-lactoyllysine; alternate. An N6-glutaryllysine; alternate modification is found at K109. K109 bears the N6-methyllysine; alternate mark. S113 is a glycosylation site (O-linked (GlcNAc) serine). T116 bears the Phosphothreonine mark. An N6-(2-hydroxyisobutyryl)lysine; alternate mark is found at K117 and K121. N6-(beta-hydroxybutyryl)lysine; alternate is present on residues K117 and K121. N6-lactoyllysine; alternate is present on residues K117 and K121. N6-glutaryllysine; alternate is present on residues K117 and K121. Residues K117 and K121 each carry the N6-succinyllysine; alternate modification. An N6-malonyllysine; alternate modification is found at K117. Residue K117 is modified to N6-methylated lysine; alternate. K121 is covalently cross-linked (Glycyl lysine isopeptide (Lys-Gly) (interchain with G-Cter in ubiquitin); alternate).

It belongs to the histone H2B family. As to quaternary structure, the nucleosome is a histone octamer containing two molecules each of H2A, H2B, H3 and H4 assembled in one H3-H4 heterotetramer and two H2A-H2B heterodimers. The octamer wraps approximately 147 bp of DNA. Post-translationally, monoubiquitination at Lys-35 (H2BK34Ub) by the MSL1/MSL2 dimer is required for histone H3 'Lys-4' (H3K4me) and 'Lys-79' (H3K79me) methylation and transcription activation at specific gene loci, such as HOXA9 and MEIS1 loci. Similarly, monoubiquitination at Lys-121 (H2BK120Ub) by the RNF20/40 complex gives a specific tag for epigenetic transcriptional activation and is also prerequisite for histone H3 'Lys-4' and 'Lys-79' methylation. It also functions cooperatively with the FACT dimer to stimulate elongation by RNA polymerase II. H2BK120Ub also acts as a regulator of mRNA splicing: deubiquitination by USP49 is required for efficient cotranscriptional splicing of a large set of exons. In terms of processing, phosphorylation at Ser-37 (H2BS36ph) by AMPK in response to stress promotes transcription. Phosphorylated on Ser-15 (H2BS14ph) by STK4/MST1 during apoptosis; which facilitates apoptotic chromatin condensation. Also phosphorylated on Ser-15 in response to DNA double strand breaks (DSBs), and in correlation with somatic hypermutation and immunoglobulin class-switch recombination. GlcNAcylation at Ser-113 promotes monoubiquitination of Lys-121. It fluctuates in response to extracellular glucose, and associates with transcribed genes. Post-translationally, ADP-ribosylated by PARP1 or PARP2 on Ser-7 (H2BS6ADPr) in response to DNA damage. H2BS6ADPr promotes recruitment of CHD1L. Mono-ADP-ribosylated on Glu-3 (H2BE2ADPr) by PARP3 in response to single-strand breaks. Poly ADP-ribosylation on Glu-36 (H2BE35ADPr) by PARP1 regulates adipogenesis: it inhibits phosphorylation at Ser-37 (H2BS36ph), thereby blocking expression of pro-adipogenetic genes. In terms of processing, crotonylation (Kcr) is specifically present in male germ cells and marks testis-specific genes in post-meiotic cells, including X-linked genes that escape sex chromosome inactivation in haploid cells. Crotonylation marks active promoters and enhancers and confers resistance to transcriptional repressors. It is also associated with post-meiotically activated genes on autosomes. Lactylated in macrophages by EP300/P300 by using lactoyl-CoA directly derived from endogenous or exogenous lactate, leading to stimulates gene transcription.

The protein localises to the nucleus. Its subcellular location is the chromosome. Its function is as follows. Core component of nucleosome. Nucleosomes wrap and compact DNA into chromatin, limiting DNA accessibility to the cellular machineries which require DNA as a template. Histones thereby play a central role in transcription regulation, DNA repair, DNA replication and chromosomal stability. DNA accessibility is regulated via a complex set of post-translational modifications of histones, also called histone code, and nucleosome remodeling. The polypeptide is Histone H2B type 1-D (Homo sapiens (Human)).